Here is a 243-residue protein sequence, read N- to C-terminus: Ribosomal RNA small subunit methyltransferase E 2 (243 aa).

It belongs to the RNA methyltransferase RsmE family.

The protein localises to the cytoplasm. It catalyses the reaction uridine(1498) in 16S rRNA + S-adenosyl-L-methionine = N(3)-methyluridine(1498) in 16S rRNA + S-adenosyl-L-homocysteine + H(+). In terms of biological role, specifically methylates the N3 position of the uracil ring of uridine 1498 (m3U1498) in 16S rRNA. Acts on the fully assembled 30S ribosomal subunit. The polypeptide is Ribosomal RNA small subunit methyltransferase E 2 (rsmE2) (Borreliella burgdorferi (strain ATCC 35210 / DSM 4680 / CIP 102532 / B31) (Borrelia burgdorferi)).